Consider the following 1128-residue polypeptide: Glutamate receptor-interacting protein 1 (1128 aa).

Phosphoserine is present on serine 43. PDZ domains follow at residues 53-136, 150-238, 252-336, 472-561, 573-658, and 673-755; these read VVEL…EYEL, TVEV…EYDV, LVEV…LPHH, EVVL…EFDV, HVKL…RKDE, and TVEL…KKQT. Disordered stretches follow at residues 754 to 798 and 935 to 981; these read QTDA…YPST and MSLN…GRKS. The segment covering 944 to 974 has biased composition (polar residues); that stretch reads PRSQLGRQASFQERSSSRPHYSQTTRSNTLP. Residues 1004–1086 enclose the PDZ 7 domain; that stretch reads KVTLYKDSDM…KLDLVISRNP (83 aa). The span at 1093-1115 shows a compositional bias: polar residues; that stretch reads IDQQSLPGDWSEQNSAFFQQPSH. The interval 1093–1128 is disordered; sequence IDQQSLPGDWSEQNSAFFQQPSHGGNLETREPTNTL.

In terms of assembly, interacts with EPHA7, EPHB2, KIF5A, KIF5B, KIF5C, GRIA2, GRIA3, GRIPAP1/GRASP1, PPFIA1, PPFIA4, FRAS1, PLCD4, PTPRF and liprins-alpha. Can form homomultimers or heteromultimers with GRIP2. Forms a ternary complex with GRIA2 and CSPG4. Interacts with ATAD1 in an ATP-dependent manner. ATAD1-catalyzed ATP hydrolysis disrupts binding to ATAD1 and to GRIA2 and leads to AMPAR complex disassembly. Interacts with EFNB1, EFNB3 and the C-terminal tail of PRLHR. Interacts with SLC30A9. Interacts with BUD23. Forms a complex with NSG1, GRIA2 and STX12; controls the intracellular fate of AMPAR and the endosomal sorting of the GRIA2 subunit toward recycling and membrane targeting. Interacts with NSG1.

It is found in the cytoplasmic vesicle. The protein resides in the perikaryon. It localises to the cell projection. The protein localises to the dendrite. Its subcellular location is the cytoplasm. It is found in the endomembrane system. The protein resides in the postsynaptic cell membrane. It localises to the postsynaptic density. The protein localises to the endoplasmic reticulum membrane. May play a role as a localized scaffold for the assembly of a multiprotein signaling complex and as mediator of the trafficking of its binding partners at specific subcellular location in neurons. Through complex formation with NSG1, GRIA2 and STX12 controls the intracellular fate of AMPAR and the endosomal sorting of the GRIA2 subunit toward recycling and membrane targeting. The protein is Glutamate receptor-interacting protein 1 (GRIP1) of Homo sapiens (Human).